The sequence spans 132 residues: Small ribosomal subunit protein uS8 (132 aa).

The protein belongs to the universal ribosomal protein uS8 family. As to quaternary structure, part of the 30S ribosomal subunit. Contacts proteins S5 and S12.

Functionally, one of the primary rRNA binding proteins, it binds directly to 16S rRNA central domain where it helps coordinate assembly of the platform of the 30S subunit. In Geobacillus thermodenitrificans (strain NG80-2), this protein is Small ribosomal subunit protein uS8.